The following is a 323-amino-acid chain: Beta-ketoacyl-[acyl-carrier-protein] synthase III (323 aa).

Active-site residues include Cys113 and His250. The interval 251–255 (QANKR) is ACP-binding. Asn280 is an active-site residue.

This sequence belongs to the thiolase-like superfamily. FabH family. As to quaternary structure, homodimer.

It localises to the cytoplasm. It carries out the reaction malonyl-[ACP] + acetyl-CoA + H(+) = 3-oxobutanoyl-[ACP] + CO2 + CoA. Its pathway is lipid metabolism; fatty acid biosynthesis. Its function is as follows. Catalyzes the condensation reaction of fatty acid synthesis by the addition to an acyl acceptor of two carbons from malonyl-ACP. Catalyzes the first condensation reaction which initiates fatty acid synthesis and may therefore play a role in governing the total rate of fatty acid production. Possesses both acetoacetyl-ACP synthase and acetyl transacylase activities. Its substrate specificity determines the biosynthesis of branched-chain and/or straight-chain of fatty acids. This Brucella suis (strain ATCC 23445 / NCTC 10510) protein is Beta-ketoacyl-[acyl-carrier-protein] synthase III.